The chain runs to 88 residues: Secretion system apparatus protein SsaS (88 aa).

Transmembrane regions (helical) follow at residues 15-35 (WIVL…GVIV) and 55-75 (LLAI…ILLN).

It belongs to the FliQ/MopD/SpaQ family.

The protein resides in the cell membrane. Functionally, part of a type III secretion system. This is Secretion system apparatus protein SsaS (ssaS) from Salmonella typhimurium (strain LT2 / SGSC1412 / ATCC 700720).